The chain runs to 1169 residues: Integrin alpha-X (1169 aa).

The first 19 residues, 1-19 (MSCTWIAFLLLLGFVSCLG), serve as a signal peptide directing secretion. The Extracellular portion of the chain corresponds to 20–1116 (FNLDAEKLTH…EMYKVHNPVP (1097 aa)). FG-GAP repeat units lie at residues 23-78 (DAEK…NCEP) and 79-138 (ISLQ…QSQN). C69 and C76 are disulfide-bonded. N-linked (GlcNAc...) asparagine glycosylation is present at N89. 2 cysteine pairs are disulfide-bonded: C108-C126 and C116-C146. Positions 152 to 330 (DIVFLIDGSG…DALKDIENQL (179 aa)) constitute a VWFA domain. D158, S160, S162, and D260 together coordinate Mg(2+). N267 is a glycosylation site (N-linked (GlcNAc...) asparagine). 5 FG-GAP repeats span residues 341-392 (ETPS…PTFI), 393-444 (NMSQ…SRHW), 445-505 (RPKS…GSRW), 508-566 (GTTL…QDIA), and 571-631 (QRIS…FTPA). A glycan (N-linked (GlcNAc...) asparagine) is linked at N393. Ca(2+) contacts are provided by D467, D469, D471, and D475. C496 and C507 are oxidised to a cystine. D531, N533, D535, D539, D594, D598, and D602 together coordinate Ca(2+). Cystine bridges form between C640-C721 and C656-C711. N734 is a glycosylation site (N-linked (GlcNAc...) asparagine). 2 disulfide bridges follow: C770–C776 and C858–C873. A glycan (N-linked (GlcNAc...) asparagine) is linked at N949. Disulfide bonds link C1007/C1031 and C1036/C1041. N1059 and N1084 each carry an N-linked (GlcNAc...) asparagine glycan. Residues 1117-1137 (LIVGSSVGGLLLLAIITAILY) traverse the membrane as a helical segment. At 1138-1169 (KAGFFKRQYKEMLEEANGQFVSDGTPTPQVAQ) the chain is on the cytoplasmic side. Positions 1140–1144 (GFFKR) match the GFFKR motif motif.

It belongs to the integrin alpha chain family. Heterodimer of an alpha and a beta subunit. Alpha-X associates with beta-2.

It localises to the membrane. Integrin alpha-X/beta-2 is a receptor for fibrinogen. It recognizes the sequence G-P-R in fibrinogen. It mediates cell-cell interaction during inflammatory responses. It is especially important in monocyte adhesion and chemotaxis. The protein is Integrin alpha-X (Itgax) of Mus musculus (Mouse).